The chain runs to 316 residues: MCTGLRFTDDQGNLYFGRNLDVGQDYGEGVIITPRNYPLPYKFLDNTTTKKAVIGMGIVVDGYPSYFDCFNEDGLGIAGLNFPHFAKFSDGPIDGKINLASYEIMLWVTQNFTKVSDVKEALKNVNLVNEAINSSFAVAPLHWIISDKDEAIIVEVSKQYGMKVFDDKLGVLTNSPDFNWHLTNLGNYTGLDPHDATAQSWNGQKVAPWGVGTGSLGLPGDSIPADRFVKAAYLNVNYPTVKGEKANVAKFFNILKSVAMIKGSVVNKLGSDEYTVYTACYSAATKTYYCNFENDFELKTYKLDDETMNADKLITY.

Cys2 acts as the Nucleophile in catalysis. Deoxycholate-binding residues include Cys2 and Arg18. Asn81 is a binding site for taurine.

This sequence belongs to the peptidase C59 family.

The enzyme catalyses cholate + taurine = taurocholate + H2O. The catalysed reaction is taurochenodeoxycholate + H2O = chenodeoxycholate + taurine. It catalyses the reaction taurodeoxycholate + H2O = deoxycholate + taurine. It carries out the reaction glycocholate + H2O = cholate + glycine. The enzyme catalyses glycodeoxycholate + H2O = deoxycholate + glycine. It functions in the pathway lipid metabolism; bile acid biosynthesis. Functionally, bile salt hydrolase that catalyzes the deconjugation of glycine- and taurine-linked bile salts, which occurs naturally in the intestines of humans, releasing amino acid residues and deconjugated bile salts (bile acids). Can hydrolyze the amide bond in the bile salts taurocholate (TCA), taurodeoxycholate (TDCA), taurochenodeoxycholate (TCDCA), glycocholate (GCA) and glycodeoxycholate (GDCA). Shows highest activity toward the taurine-conjugated bile salts TCA and TCDCA. The activity toward the other three substrates (TDCA, GCA and GDCA) is relatively low. This enzyme likely contributes to bile salt resistance of the strain and may be associated with survival capability of strain JCM1131 within the human intestine by bile detoxification. The chain is Conjugated bile acid hydrolase from Lactobacillus gasseri (strain ATCC 33323 / DSM 20243 / BCRC 14619 / CIP 102991 / JCM 1131 / KCTC 3163 / NCIMB 11718 / NCTC 13722 / AM63).